The sequence spans 206 residues: 3-isopropylmalate dehydratase small subunit (206 aa).

This sequence belongs to the LeuD family. LeuD type 1 subfamily. Heterodimer of LeuC and LeuD.

It carries out the reaction (2R,3S)-3-isopropylmalate = (2S)-2-isopropylmalate. It functions in the pathway amino-acid biosynthesis; L-leucine biosynthesis; L-leucine from 3-methyl-2-oxobutanoate: step 2/4. Functionally, catalyzes the isomerization between 2-isopropylmalate and 3-isopropylmalate, via the formation of 2-isopropylmaleate. The sequence is that of 3-isopropylmalate dehydratase small subunit from Leptospira interrogans serogroup Icterohaemorrhagiae serovar copenhageni (strain Fiocruz L1-130).